Reading from the N-terminus, the 896-residue chain is Translation initiation factor IF-2 (896 aa).

Over residues 93 to 219 the composition is skewed to basic and acidic residues; the sequence is VKRDPQEAER…RMAEENEKNW (127 aa). The tract at residues 93–307 is disordered; it reads VKRDPQEAER…GSALQQGFQK (215 aa). The segment covering 256–271 has biased composition (basic residues); it reads GRSRSSKAARPAKKGN. The span at 272-285 shows a compositional bias: basic and acidic residues; that stretch reads KHAESKADREEARA. A tr-type G domain is found at 395–564; that stretch reads PRAPVVTIMG…LLQAEVLELK (170 aa). Residues 404–411 form a G1 region; that stretch reads GHVDHGKT. A GTP-binding site is contributed by 404-411; that stretch reads GHVDHGKT. Residues 429-433 form a G2 region; sequence GITQH. The interval 450 to 453 is G3; the sequence is DTPG. GTP contacts are provided by residues 450 to 454 and 504 to 507; these read DTPGH and NKID. Residues 504–507 are G4; it reads NKID. A G5 region spans residues 540–542; the sequence is SAK.

Belongs to the TRAFAC class translation factor GTPase superfamily. Classic translation factor GTPase family. IF-2 subfamily.

Its subcellular location is the cytoplasm. In terms of biological role, one of the essential components for the initiation of protein synthesis. Protects formylmethionyl-tRNA from spontaneous hydrolysis and promotes its binding to the 30S ribosomal subunits. Also involved in the hydrolysis of GTP during the formation of the 70S ribosomal complex. The protein is Translation initiation factor IF-2 of Klebsiella pneumoniae (strain 342).